A 160-amino-acid chain; its full sequence is Major strawberry allergen Fra a 1.07 (160 aa).

The protein belongs to the BetVI family. Phosphorylated in vivo. Phosphorylation prevents its activity as ribonuclease. In terms of tissue distribution, highly expressed in roots. Expressed a low levels in ripe red fruits.

Functionally, possesses ribonuclease activity in vitro. In Fragaria ananassa (Strawberry), this protein is Major strawberry allergen Fra a 1.07.